Reading from the N-terminus, the 631-residue chain is Chaperone protein DnaK (631 aa).

Threonine 198 is modified (phosphothreonine; by autocatalysis). The interval 602-631 (EAAGGAQQAGKDDVVDAEFTEVDDDKKKSA) is disordered.

Belongs to the heat shock protein 70 family.

Acts as a chaperone. In Rhodopseudomonas palustris (strain ATCC BAA-98 / CGA009), this protein is Chaperone protein DnaK.